Consider the following 220-residue polypeptide: Redox-sensing transcriptional repressor Rex (220 aa).

A DNA-binding region (H-T-H motif) is located at residues Trp-25–Val-64. Gly-99–Gly-104 contacts NAD(+).

It belongs to the transcriptional regulatory Rex family. As to quaternary structure, homodimer.

The protein resides in the cytoplasm. Its function is as follows. Modulates transcription in response to changes in cellular NADH/NAD(+) redox state. The protein is Redox-sensing transcriptional repressor Rex of Bacteroides thetaiotaomicron (strain ATCC 29148 / DSM 2079 / JCM 5827 / CCUG 10774 / NCTC 10582 / VPI-5482 / E50).